A 418-amino-acid chain; its full sequence is Tyrosine--tRNA ligase (418 aa).

Y38 serves as a coordination point for L-tyrosine. The 'HIGH' region motif lies at 43–52 (CTAKSLHVGS). L-tyrosine-binding residues include Y175 and Q179. The 'KMSKS' region signature appears at 235–239 (KMGKT). An ATP-binding site is contributed by K238. Residues 348–413 (LPIIKLLQIS…CGKKRHLKIM (66 aa)) form the S4 RNA-binding domain.

This sequence belongs to the class-I aminoacyl-tRNA synthetase family. TyrS type 1 subfamily. In terms of assembly, homodimer.

The protein resides in the cytoplasm. It catalyses the reaction tRNA(Tyr) + L-tyrosine + ATP = L-tyrosyl-tRNA(Tyr) + AMP + diphosphate + H(+). Its function is as follows. Catalyzes the attachment of tyrosine to tRNA(Tyr) in a two-step reaction: tyrosine is first activated by ATP to form Tyr-AMP and then transferred to the acceptor end of tRNA(Tyr). The protein is Tyrosine--tRNA ligase of Ehrlichia canis (strain Jake).